The following is a 184-amino-acid chain: NADH-quinone oxidoreductase subunit B (184 aa).

Positions 37, 38, 103, and 132 each coordinate [4Fe-4S] cluster.

It belongs to the complex I 20 kDa subunit family. NDH-1 is composed of 14 different subunits. Subunits NuoB, C, D, E, F, and G constitute the peripheral sector of the complex. [4Fe-4S] cluster is required as a cofactor.

It is found in the cell membrane. The enzyme catalyses a quinone + NADH + 5 H(+)(in) = a quinol + NAD(+) + 4 H(+)(out). NDH-1 shuttles electrons from NADH, via FMN and iron-sulfur (Fe-S) centers, to quinones in the respiratory chain. The immediate electron acceptor for the enzyme in this species is believed to be a menaquinone. Couples the redox reaction to proton translocation (for every two electrons transferred, four hydrogen ions are translocated across the cytoplasmic membrane), and thus conserves the redox energy in a proton gradient. This Mycolicibacterium gilvum (strain PYR-GCK) (Mycobacterium gilvum (strain PYR-GCK)) protein is NADH-quinone oxidoreductase subunit B.